The following is a 628-amino-acid chain: Chaperone protein HtpG (628 aa).

The a; substrate-binding stretch occupies residues 1–337 (MSEKKYTFET…SADLPLNVSR (337 aa)). A b region spans residues 338-554 (EILQHNKVID…DYGMSLHMQK (217 aa)). Positions 555 to 628 (MMEEAGQSFM…FVKLVNKYIR (74 aa)) are c.

This sequence belongs to the heat shock protein 90 family. In terms of assembly, homodimer.

It is found in the cytoplasm. In terms of biological role, molecular chaperone. Has ATPase activity. The sequence is that of Chaperone protein HtpG from Francisella tularensis subsp. tularensis (strain WY96-3418).